A 145-amino-acid chain; its full sequence is Transmembrane protein 170A (145 aa).

Topologically, residues 1 to 50 are lumenal; sequence MIEALIVGEMQDVQIGFVKQILSLNLVPRSNNTTCGNNTSLCDFSEMWYG. N-linked (GlcNAc...) asparagine glycans are attached at residues Asn-31 and Asn-37. Residues 51 to 71 form a helical membrane-spanning segment; the sequence is VFLWAVVSSLIFHLPAALLAL. The Cytoplasmic portion of the chain corresponds to 72-81; the sequence is ATLRRHKVAR. The chain crosses the membrane as a helical span at residues 82–102; the sequence is FFPLGILLMGIIGPLFGGVLT. Residues 103–117 are Lumenal-facing; it reads SAAIAGVYKAAGKSM. The chain crosses the membrane as a helical span at residues 118–138; the sequence is FSLEALVFGVGQSLFIFIISF. The Cytoplasmic segment spans residues 139-145; sequence LRILATL.

This sequence belongs to the TMEM170 family.

The protein localises to the endoplasmic reticulum membrane. It localises to the nucleus envelope. In terms of biological role, may regulate membrane morphogenesis in the endoplasmic reticulum (ER) by promoting ER sheet formation at the expense of ER tubules. The protein is Transmembrane protein 170A (tmem170a) of Danio rerio (Zebrafish).